Reading from the N-terminus, the 432-residue chain is Adenylosuccinate synthetase (432 aa).

GTP contacts are provided by residues 13 to 19 (GDEGKGK) and 41 to 43 (GHT). Asp14 functions as the Proton acceptor in the catalytic mechanism. Mg(2+)-binding residues include Asp14 and Gly41. IMP-binding positions include 14–17 (DEGK), 39–42 (NAGH), Thr130, Arg144, Gln225, Thr240, and Arg304. His42 functions as the Proton donor in the catalytic mechanism. Residue 300-306 (ATTGRKR) coordinates substrate. GTP-binding positions include Arg306, 332–334 (KLD), and 414–416 (STG).

The protein belongs to the adenylosuccinate synthetase family. In terms of assembly, homodimer. Requires Mg(2+) as cofactor.

The protein localises to the cytoplasm. The catalysed reaction is IMP + L-aspartate + GTP = N(6)-(1,2-dicarboxyethyl)-AMP + GDP + phosphate + 2 H(+). It functions in the pathway purine metabolism; AMP biosynthesis via de novo pathway; AMP from IMP: step 1/2. Functionally, plays an important role in the de novo pathway of purine nucleotide biosynthesis. Catalyzes the first committed step in the biosynthesis of AMP from IMP. In Alkalilimnicola ehrlichii (strain ATCC BAA-1101 / DSM 17681 / MLHE-1), this protein is Adenylosuccinate synthetase.